Here is a 374-residue protein sequence, read N- to C-terminus: Wnt inhibitory factor 1 (374 aa).

The first 28 residues, 1–28 (MSLTGYFAAPLCSIFLFILAHADAGQQE), serve as a signal peptide directing secretion. The region spanning 33–172 (MWIDAHQARV…PQNAIFFKTC (140 aa)) is the WIF domain. A glycan (N-linked (GlcNAc...) asparagine) is linked at N83. Disulfide bonds link C135-C172, C177-C187, C181-C193, C195-C204, C209-C219, C213-C225, and C227-C236. EGF-like domains follow at residues 173–205 (QQAKCTGGCRNGGFCNDRHVCECPDGFYGPHCE), 208–237 (LCMPRCMNGGLCVTPGLCICPPGYYGINCD), 237–269 (DKVNCTTHCLNGGTCFYPGKCICPSGYEGEQCE), 270–301 (TSKCQQPCRNGGKCSGKNKCKCSKGYQGDLCS), and 302–333 (KPVCEPSCGAHGTCIEPNKCQCKEGWNGRYCN). N240 carries an N-linked (GlcNAc...) asparagine glycan. Cystine bridges form between C241–C251, C245–C257, C259–C268, C273–C283, C277–C289, C291–C300, C305–C315, C309–C321, and C323–C332. A disordered region spans residues 343–374 (ALRPTGSRNRQHTPSPKRTEDRQALPESNYIW). Residues 348-358 (GSRNRQHTPSP) are compositionally biased toward polar residues.

In terms of tissue distribution, during somatogenesis, expressed predominantly in unsegmented paraxial presomitic mesoderm and, to a much lesser extent, in newly segmented somites.

Its subcellular location is the secreted. In terms of biological role, binds to WNT proteins and inhibits their activities. May be involved in mesoderm segmentation. The sequence is that of Wnt inhibitory factor 1 (wif1) from Xenopus laevis (African clawed frog).